A 148-amino-acid chain; its full sequence is Small ribosomal subunit protein eS19 (148 aa).

Residues His79–Ala90 are compositionally biased toward basic residues. Disordered stretches follow at residues His79–Ala98 and Asp116–Glu148. The span at Arg130–Val140 shows a compositional bias: basic and acidic residues.

Belongs to the eukaryotic ribosomal protein eS19 family.

This chain is Small ribosomal subunit protein eS19 (rps19), found in Emericella nidulans (strain FGSC A4 / ATCC 38163 / CBS 112.46 / NRRL 194 / M139) (Aspergillus nidulans).